The primary structure comprises 166 residues: Nucleotide-binding protein Acid_3194 (166 aa).

Belongs to the YajQ family.

Nucleotide-binding protein. The sequence is that of Nucleotide-binding protein Acid_3194 from Solibacter usitatus (strain Ellin6076).